Consider the following 119-residue polypeptide: MKRIAFVFSTAPHGTAAGREGLDALLATSALTDDLAVFFIADGVFQLLSGQKPDAVLARDYIATFKLLGLYDIEQCWVCAASLRERGLDPQTPFVVEATPLEADALRRELANYDVILRF.

This sequence belongs to the DsrF/TusC family. As to quaternary structure, heterohexamer, formed by a dimer of trimers. The hexameric TusBCD complex contains 2 copies each of TusB, TusC and TusD. The TusBCD complex interacts with TusE.

The protein resides in the cytoplasm. Part of a sulfur-relay system required for 2-thiolation of 5-methylaminomethyl-2-thiouridine (mnm(5)s(2)U) at tRNA wobble positions. The chain is Protein TusC from Shigella boydii serotype 18 (strain CDC 3083-94 / BS512).